The sequence spans 201 residues: LIM domain-containing protein PLIM2b (201 aa).

2 LIM zinc-binding domains span residues 8-68 and 103-163; these read DKCT…LFKE and DKCA…LFME. The segment at 171-201 is disordered; that stretch reads KKKSESQEVLPEVVPEEQPAPPPPDENREDN. Low complexity predominate over residues 177 to 187; that stretch reads QEVLPEVVPEE.

In terms of assembly, interacts with NEK3.

The sequence is that of LIM domain-containing protein PLIM2b from Oryza sativa subsp. japonica (Rice).